The following is a 438-amino-acid chain: Tol-Pal system protein TolB (438 aa).

The signal sequence occupies residues 1 to 21 (MVKRSLLVLALLICLPATLFA).

The protein belongs to the TolB family. In terms of assembly, the Tol-Pal system is composed of five core proteins: the inner membrane proteins TolA, TolQ and TolR, the periplasmic protein TolB and the outer membrane protein Pal. They form a network linking the inner and outer membranes and the peptidoglycan layer.

The protein localises to the periplasm. In terms of biological role, part of the Tol-Pal system, which plays a role in outer membrane invagination during cell division and is important for maintaining outer membrane integrity. The protein is Tol-Pal system protein TolB of Desulfosudis oleivorans (strain DSM 6200 / JCM 39069 / Hxd3) (Desulfococcus oleovorans).